A 210-amino-acid chain; its full sequence is Putative fructokinase-8 (210 aa).

Belongs to the carbohydrate kinase PfkB family.

It catalyses the reaction D-fructose + ATP = D-fructose 6-phosphate + ADP + H(+). It functions in the pathway glycan biosynthesis; starch biosynthesis. May play an important role in maintaining the flux of carbon towards starch formation. This Arabidopsis thaliana (Mouse-ear cress) protein is Putative fructokinase-8.